Here is a 304-residue protein sequence, read N- to C-terminus: UDP-N-acetylenolpyruvoylglucosamine reductase (304 aa).

Positions 33–198 constitute an FAD-binding PCMH-type domain; that stretch reads IGGPADLLVM…LEVVLALQEG (166 aa). R177 is an active-site residue. Catalysis depends on S227, which acts as the Proton donor. Residue E297 is part of the active site.

It belongs to the MurB family. FAD serves as cofactor.

It is found in the cytoplasm. The catalysed reaction is UDP-N-acetyl-alpha-D-muramate + NADP(+) = UDP-N-acetyl-3-O-(1-carboxyvinyl)-alpha-D-glucosamine + NADPH + H(+). Its pathway is cell wall biogenesis; peptidoglycan biosynthesis. Its function is as follows. Cell wall formation. The sequence is that of UDP-N-acetylenolpyruvoylglucosamine reductase from Alkaliphilus metalliredigens (strain QYMF).